The primary structure comprises 336 residues: Casein kinase II subunit alpha (336 aa).

Positions 32 to 317 (YEVVRKIGRG…AKEAMAHPYF (286 aa)) constitute a Protein kinase domain. ATP-binding positions include 38 to 46 (IGRGKYSEV) and Lys-61. The active-site Proton acceptor is Asp-149.

This sequence belongs to the protein kinase superfamily. Ser/Thr protein kinase family. CK2 subfamily. As to quaternary structure, tetramer composed of two alpha chains, one beta chain and one beta' chain.

The catalysed reaction is L-seryl-[protein] + ATP = O-phospho-L-seryl-[protein] + ADP + H(+). It carries out the reaction L-threonyl-[protein] + ATP = O-phospho-L-threonyl-[protein] + ADP + H(+). Catalytic subunit of a constitutively active serine/threonine-protein kinase complex that phosphorylates a large number of substrates containing acidic residues C-terminal to the phosphorylated serine or threonine. Phosphorylates the frq clock protein thus regulating the circadian clock. In Neurospora crassa (strain ATCC 24698 / 74-OR23-1A / CBS 708.71 / DSM 1257 / FGSC 987), this protein is Casein kinase II subunit alpha (cka).